The chain runs to 1004 residues: Presequence protease, mitochondrial (1004 aa).

Residues 1–34 (MLRNAAAGARKAVTELSQFPKPGEKLHGFTLVRS) constitute a mitochondrion transit peptide. Residue His84 coordinates Zn(2+). Catalysis depends on Glu87, which acts as the Proton acceptor. Position 88 (His88) interacts with Zn(2+). Glu160 is a catalytic residue. Glu188 contributes to the Zn(2+) binding site.

This sequence belongs to the peptidase M16 family. PreP subfamily. In terms of assembly, monomer and homodimer; homodimerization is induced by binding of the substrate. It depends on Zn(2+) as a cofactor.

The protein localises to the mitochondrion intermembrane space. It localises to the mitochondrion matrix. Its function is as follows. Degrades mitochondrial transit peptides after their cleavage in the intermembrane space or in the matrix, and presequence peptides; clearance of these peptides is required to keep the presequence processing machinery running. Preferentially cleaves the N-terminal side of paired basic amino acid residues. Also degrades other unstructured peptides. May function as an ATP-dependent peptidase as opposed to a metalloendopeptidase. The polypeptide is Presequence protease, mitochondrial (CYM1) (Gibberella zeae (strain ATCC MYA-4620 / CBS 123657 / FGSC 9075 / NRRL 31084 / PH-1) (Wheat head blight fungus)).